The sequence spans 155 residues: Large ribosomal subunit protein eL24B (155 aa).

S7 carries the phosphoserine modification. The disordered stretch occupies residues 66–155 (EVAKKRSRKT…AFQKVAATSR (90 aa)). Over residues 89 to 129 (LIKERRSLKPEVRKANREEKLKANKEKKRAEKAARKAEKAK) the composition is skewed to basic and acidic residues.

The protein belongs to the eukaryotic ribosomal protein eL24 family. In terms of assembly, component of the large ribosomal subunit (LSU). Mature yeast ribosomes consist of a small (40S) and a large (60S) subunit. The 40S small subunit contains 1 molecule of ribosomal RNA (18S rRNA) and 33 different proteins (encoded by 57 genes). The large 60S subunit contains 3 rRNA molecules (25S, 5.8S and 5S rRNA) and 46 different proteins (encoded by 81 genes).

It is found in the cytoplasm. Component of the ribosome, a large ribonucleoprotein complex responsible for the synthesis of proteins in the cell. The small ribosomal subunit (SSU) binds messenger RNAs (mRNAs) and translates the encoded message by selecting cognate aminoacyl-transfer RNA (tRNA) molecules. The large subunit (LSU) contains the ribosomal catalytic site termed the peptidyl transferase center (PTC), which catalyzes the formation of peptide bonds, thereby polymerizing the amino acids delivered by tRNAs into a polypeptide chain. The nascent polypeptides leave the ribosome through a tunnel in the LSU and interact with protein factors that function in enzymatic processing, targeting, and the membrane insertion of nascent chains at the exit of the ribosomal tunnel. The protein is Large ribosomal subunit protein eL24B of Saccharomyces cerevisiae (strain ATCC 204508 / S288c) (Baker's yeast).